Here is a 421-residue protein sequence, read N- to C-terminus: Zinc chaperone AztD (421 aa).

Positions Met-1–Ala-29 are cleaved as a signal peptide. Zn(2+) is bound by residues His-101, His-104, Asp-106, His-126, His-169, His-216, and His-405. Cys-212 and Cys-229 are disulfide-bonded. Positions Gly-399–His-421 are disordered. Basic and acidic residues predominate over residues Val-404–His-421. Positions His-408–His-419 match the N-terminal Zn(2+)-binding motif; binds a third Zn(2+) with low affinity motif.

Monomer.

The protein localises to the periplasm. In terms of biological role, acts as a zinc chaperone in the AztABCD zinc transport system. Directly transfers one zinc cation to the solute binding protein AztC; the transfer occurs without the formation of a stable interaction. Binds 3 Zn(2+), two with high affinity and one with low affinity, and transfers only Zn(2+) bound to site 2 to AztC. This Citrobacter koseri (strain ATCC BAA-895 / CDC 4225-83 / SGSC4696) protein is Zinc chaperone AztD.